The chain runs to 218 residues: Response regulator UvrY (218 aa).

The 117-residue stretch at N3–Y119 folds into the Response regulatory domain. 4-aspartylphosphate is present on D54. The HTH luxR-type domain occupies T143–G208. Positions V167–Y186 form a DNA-binding region, H-T-H motif.

Phosphorylated and activated by BarA.

It localises to the cytoplasm. Member of the two-component regulatory system UvrY/BarA involved in the regulation of carbon metabolism via the CsrA/CsrB regulatory system. UvrY activates the transcription of the untranslated csrB RNA and of barA, in an autoregulatory loop. Mediates the effects of CsrA on csrB RNA by BarA-dependent and BarA-independent mechanisms. The polypeptide is Response regulator UvrY (uvrY) (Escherichia coli (strain K12)).